Consider the following 380-residue polypeptide: MLIVADENIPLLDAFFQGFGEIRRYPGRSLDAASVKDADILLVRSVTKVDRQLLEGSRVRFVGTCTIGTDHLDLDYFAQASISWSSAPGCNARGVVDYVLGSLLTLAELDGVALAERVYGVVGAGEVGGRLVRVLHGLGWKVLVCDPLRQAAEGGDYVSLETIVQQCDVISLHTPLQRGGEHPTWHLLGPAQLAQLRPGAWLVNASRGPVVDNIALRELLLDREDVHAVLDVWEGEPQVDLQLADLCTLASPHIAGYSLDGRQRGTAQIYQALCRFLGVDEQVQLADLLPRPALAQVELDASTDPAWALATLCRAVYDPRRDDADFRRSLSDDPQLQRAAFDQLRKHYPPRREIEGLAVRLRGESPQLAQLVSALGGALV.

Substrate-binding residues include Ser-45 and Thr-66. NAD(+)-binding positions include Asp-146, Thr-174, 205 to 207 (ASR), and Asp-231. The active site involves Arg-207. The active site involves Glu-236. His-253 (proton donor) is an active-site residue. Gly-256 serves as a coordination point for NAD(+). Residue Tyr-257 participates in substrate binding.

This sequence belongs to the D-isomer specific 2-hydroxyacid dehydrogenase family. PdxB subfamily. In terms of assembly, homodimer.

It is found in the cytoplasm. The catalysed reaction is 4-phospho-D-erythronate + NAD(+) = (R)-3-hydroxy-2-oxo-4-phosphooxybutanoate + NADH + H(+). It functions in the pathway cofactor biosynthesis; pyridoxine 5'-phosphate biosynthesis; pyridoxine 5'-phosphate from D-erythrose 4-phosphate: step 2/5. Its function is as follows. Catalyzes the oxidation of erythronate-4-phosphate to 3-hydroxy-2-oxo-4-phosphonooxybutanoate. This chain is Erythronate-4-phosphate dehydrogenase, found in Pseudomonas putida (strain GB-1).